Reading from the N-terminus, the 288-residue chain is Acetyl-coenzyme A carboxylase carboxyl transferase subunit beta (288 aa).

Positions 32–288 (MWAKCPSCKR…LRLHSLEGWR (257 aa)) constitute a CoA carboxyltransferase N-terminal domain. Zn(2+) contacts are provided by Cys36, Cys39, Cys54, and Cys57. Residues 36 to 57 (CPSCKRTLYTKEMGAEKICPHC) form a C4-type zinc finger.

This sequence belongs to the AccD/PCCB family. In terms of assembly, acetyl-CoA carboxylase is a heterohexamer composed of biotin carboxyl carrier protein (AccB), biotin carboxylase (AccC) and two subunits each of ACCase subunit alpha (AccA) and ACCase subunit beta (AccD). Zn(2+) is required as a cofactor.

It is found in the cytoplasm. It carries out the reaction N(6)-carboxybiotinyl-L-lysyl-[protein] + acetyl-CoA = N(6)-biotinyl-L-lysyl-[protein] + malonyl-CoA. It functions in the pathway lipid metabolism; malonyl-CoA biosynthesis; malonyl-CoA from acetyl-CoA: step 1/1. Component of the acetyl coenzyme A carboxylase (ACC) complex. Biotin carboxylase (BC) catalyzes the carboxylation of biotin on its carrier protein (BCCP) and then the CO(2) group is transferred by the transcarboxylase to acetyl-CoA to form malonyl-CoA. The sequence is that of Acetyl-coenzyme A carboxylase carboxyl transferase subunit beta from Enterococcus faecalis (strain ATCC 700802 / V583).